We begin with the raw amino-acid sequence, 727 residues long: Centrosomal protein kizuna (727 aa).

The interval 1 to 20 (MTERSGRGGGTRGASALPSP) is disordered. Positions 77–124 (KNARIRNQEYLKQFERIQANITASLEKLQELKIEFETQIKKMQLLSKD) form a coiled coil. Disordered regions lie at residues 176–226 (DFTT…NKSD), 271–456 (EGKK…FTNL), and 564–727 (RLAV…PRTP). Residues 198 to 223 (HQQTAQSSDVTGSRVVQTPGDTQCLN) show a composition bias toward polar residues. Over residues 286–324 (LSPENRTTDLKCDSSRRSEGSEGEILTREHIEVEEERAR) the composition is skewed to basic and acidic residues. Position 328 is a phosphoserine (S328). The segment covering 343–359 (PQEKPPARKASSDHLPC) has biased composition (basic and acidic residues). The span at 380 to 390 (LSSSSDLTVSV) shows a compositional bias: low complexity. T387 carries the post-translational modification Phosphothreonine; by PLK1. Residues 442–455 (APSTPDSPNESFTN) are compositionally biased toward polar residues. Low complexity predominate over residues 569-583 (SSKSSCSLPSTPSDE). Over residues 603-613 (QEDESREESTE) the composition is skewed to acidic residues. Residues 631–642 (LKQSALQGSTHQ) show a composition bias toward polar residues. 2 stretches are compositionally biased toward low complexity: residues 659–669 (GLKTGSGTFKT) and 677–689 (SEASFSSSEGSPL). S711, S714, and S716 each carry phosphoserine.

This sequence belongs to the kizuna family. Interacts with AKAP9, CEP72, ODF2, PCNT and TUBGCP2. Post-translationally, phosphorylation at Thr-387 by PLK1 is not needed for centrosomal localization or pericentriolar material expansion but is indispensable for spindle-pole stabilization.

It localises to the cytoplasm. The protein localises to the cytoskeleton. It is found in the microtubule organizing center. Its subcellular location is the centrosome. The protein resides in the cilium basal body. Functionally, centrosomal protein required for establishing a robust mitotic centrosome architecture that can endure the forces that converge on the centrosomes during spindle formation. Required for stabilizing the expanded pericentriolar material around the centriole. The protein is Centrosomal protein kizuna (KIZ) of Bos taurus (Bovine).